We begin with the raw amino-acid sequence, 175 residues long: Peptide deformylase (175 aa).

2 residues coordinate Fe cation: Cys-98 and His-140. Glu-141 is an active-site residue. His-144 serves as a coordination point for Fe cation.

It belongs to the polypeptide deformylase family. It depends on Fe(2+) as a cofactor.

It carries out the reaction N-terminal N-formyl-L-methionyl-[peptide] + H2O = N-terminal L-methionyl-[peptide] + formate. In terms of biological role, removes the formyl group from the N-terminal Met of newly synthesized proteins. Requires at least a dipeptide for an efficient rate of reaction. N-terminal L-methionine is a prerequisite for activity but the enzyme has broad specificity at other positions. The chain is Peptide deformylase from Nitrobacter hamburgensis (strain DSM 10229 / NCIMB 13809 / X14).